The primary structure comprises 608 residues: Probable methyltransferase PMT3 (608 aa).

The Cytoplasmic portion of the chain corresponds to 1-12 (MKGRSDGGQKKR). Residues 13-33 (VIALVCVAAVVLVFVYLFYGS) form a helical; Signal-anchor for type II membrane protein membrane-spanning segment. The Lumenal portion of the chain corresponds to 34 to 608 (SDHRASAIEY…LTSESLRDME (575 aa)). N-linked (GlcNAc...) asparagine glycosylation is present at Asn342.

This sequence belongs to the methyltransferase superfamily.

The protein resides in the golgi apparatus membrane. This Arabidopsis thaliana (Mouse-ear cress) protein is Probable methyltransferase PMT3.